We begin with the raw amino-acid sequence, 410 residues long: MSSRSSWSSTEQINRTISSRADDLPPQPRRLEVVSKQATRVTALSTKLEWKIEQFEKLMKLIKNGSNLISRMFSVPDAPTVCWELHVYPNGKRDEDVNNVSFFLRQVGLARGEEPIMTEFQIYALDANNQRVSVCRDTKDFTNQQGRGKFQVSRDKMLGALRSDGTLFLICEVEYFPPGSKISVEPVVDEDVSTEEQEEMPEVIVRANNRSMWEDELFTDCVIHVGNKHIKAHRCILGQNSPVFKSMFSSPNMIEAQKGEIHIEDAKYDSVRAMVEFMYTGATESLESQGNIDEILAIADKYEVLMLKDQCERLIAQTINLKNVTQIAMFSDTYTADYLKSAVIRFLTTHHRVVIKTQDWISLKKSRHELANELLEAVLSTDQDDDDVTSNIPISVSPPPARKRLRRSAK.

Residues 1 to 19 (MSSRSSWSSTEQINRTISS) are compositionally biased toward polar residues. Positions 1–29 (MSSRSSWSSTEQINRTISSRADDLPPQPR) are disordered. The region spanning 45-173 (STKLEWKIEQ…DGTLFLICEV (129 aa)) is the MATH domain. The BTB domain maps to 219-287 (TDCVIHVGNK…MYTGATESLE (69 aa)). A disordered region spans residues 389-410 (TSNIPISVSPPPARKRLRRSAK). A compositionally biased stretch (basic residues) spans 401 to 410 (ARKRLRRSAK).

In terms of assembly, interacts with cul-3.

It participates in protein modification; protein ubiquitination. Functionally, probable substrate-specific adapter of an E3 ubiquitin-protein ligase complex which mediates the ubiquitination and subsequent proteasomal degradation of target proteins. The chain is BTB and MATH domain-containing protein 42 (bath-42) from Caenorhabditis elegans.